Here is a 194-residue protein sequence, read N- to C-terminus: MGVFNRLRSFYEARIAPTVASFLSRISPDPNIYTLASPVAAAAALPAWLYISPVASLLLIALSLLLDAVDGAVARFTGRVSPLGSFLDSSLDRISDSLYHATLYIAGVHPLIVIAMLSGGLIVPYLRAKGESLGLEVRGRGLMERGERSIAILAILAISIYNLQTALALASAAAVLVWITVIQRMVYIAGELRR.

2 helical membrane passes run 32 to 51 (IYTL…WLYI) and 58 to 78 (LLIA…RFTG). Positions 67, 70, 88, and 92 each coordinate Mg(2+). Residue aspartate 92 is the Proton acceptor of the active site. 3 helical membrane passes run 103–123 (LYIA…GLIV), 150–170 (IAIL…LALA), and 172–192 (AAAV…AGEL).

The protein belongs to the CDP-alcohol phosphatidyltransferase class-I family. Mn(2+) serves as cofactor. Requires Mg(2+) as cofactor.

The protein resides in the cell membrane. The catalysed reaction is CDP-2,3-bis-O-(phytanyl)-sn-glycerol + 1D-myo-inositol 3-phosphate = saturated 1-archaetidyl-1D-myo-inositol 3-phosphate + CMP + H(+). It functions in the pathway lipid metabolism; phospholipid metabolism. Functionally, catalyzes the formation of archaetidylinositol phosphate (AIP) from CDP-archaeol (CDP-ArOH or CDP-2,3-bis-(O-phytanyl)-sn-glycerol) and 1L-myo-inositol 1-phosphate (IP or 1D-myo-inositol 3-phosphate). AIP is a precursor of archaetidyl-myo-inositol (AI), an ether-type inositol phospholipid ubiquitously distributed in archaea membranes and essential for glycolipid biosynthesis in archaea. This is Archaetidylinositol phosphate synthase from Aeropyrum pernix (strain ATCC 700893 / DSM 11879 / JCM 9820 / NBRC 100138 / K1).